We begin with the raw amino-acid sequence, 307 residues long: tRNA pseudouridine synthase B (307 aa).

Asp38 serves as the catalytic Nucleophile.

Belongs to the pseudouridine synthase TruB family. Type 1 subfamily.

It catalyses the reaction uridine(55) in tRNA = pseudouridine(55) in tRNA. Its function is as follows. Responsible for synthesis of pseudouridine from uracil-55 in the psi GC loop of transfer RNAs. The protein is tRNA pseudouridine synthase B of Bacillus anthracis.